The primary structure comprises 524 residues: General transcription factor IIF subunit 1 (524 aa).

Disordered stretches follow at residues 56–76 (MYQE…RKQR) and 181–462 (RLKD…IQLT). The span at 242 to 257 (KPQKKVPAKGGKKKKR) shows a compositional bias: basic residues. The segment covering 262-289 (EALEDSDDGDFEGQEVDYMSDESSSDEE) has biased composition (acidic residues). Positions 290 to 307 (LPGKIKPAKEEEGPKGLD) are enriched in basic and acidic residues. 2 stretches are compositionally biased toward acidic residues: residues 308–327 (EQSE…EEGE) and 347–358 (SDESETSEDSDI). Positions 368-378 (QKKKTPPKKDK) are enriched in basic residues. The segment covering 381–397 (GSNSSSRGNSRPGTPSP) has biased composition (low complexity). The segment covering 436 to 459 (PQNTSGKSTPQPQSGKSTPSSGDI) has biased composition (polar residues).

It belongs to the TFIIF alpha subunit family. As to quaternary structure, heterodimer of an alpha and a beta subunit. In terms of processing, phosphorylated on Ser and other residues by TAF1 and casein kinase II-like kinases.

The protein localises to the nucleus. In terms of biological role, TFIIF is a general transcription initiation factor that binds to RNA polymerase II and helps to recruit it to the initiation complex in collaboration with TFIIB. It promotes transcription elongation. This is General transcription factor IIF subunit 1 (gtf2f1) from Xenopus laevis (African clawed frog).